An 861-amino-acid chain; its full sequence is Bifunctional uridylyltransferase/uridylyl-removing enzyme (861 aa).

Residues 1–321 (MKNDNRIIKN…VYHQKQKIIR (321 aa)) are uridylyltransferase. Residues 322–678 (LDDEFQLSNR…IMPHHSQGGT (357 aa)) form a uridylyl-removing region. In terms of domain architecture, HD spans 440–562 (VDQHTLFVIR…LPHARYLDYL (123 aa)). 2 ACT domains span residues 679-760 (EVFI…AVSR) and 788-861 (QLFL…KSKY).

The protein belongs to the GlnD family. The cofactor is Mg(2+).

It carries out the reaction [protein-PII]-L-tyrosine + UTP = [protein-PII]-uridylyl-L-tyrosine + diphosphate. The catalysed reaction is [protein-PII]-uridylyl-L-tyrosine + H2O = [protein-PII]-L-tyrosine + UMP + H(+). Uridylyltransferase (UTase) activity is inhibited by glutamine, while glutamine activates uridylyl-removing (UR) activity. Functionally, modifies, by uridylylation and deuridylylation, the PII regulatory proteins (GlnB and homologs), in response to the nitrogen status of the cell that GlnD senses through the glutamine level. Under low glutamine levels, catalyzes the conversion of the PII proteins and UTP to PII-UMP and PPi, while under higher glutamine levels, GlnD hydrolyzes PII-UMP to PII and UMP (deuridylylation). Thus, controls uridylylation state and activity of the PII proteins, and plays an important role in the regulation of nitrogen assimilation and metabolism. The chain is Bifunctional uridylyltransferase/uridylyl-removing enzyme from Legionella pneumophila subsp. pneumophila (strain Philadelphia 1 / ATCC 33152 / DSM 7513).